A 193-amino-acid chain; its full sequence is dCTP deaminase (193 aa).

DCTP is bound by residues 110–115 (RSSLAR), Asp128, 136–138 (VLE), Tyr171, Lys178, and Gln182. The Proton donor/acceptor role is filled by Glu138. Residues 174–193 (RKSAKYKDQQEAVASRISQD) form a disordered region.

It belongs to the dCTP deaminase family. As to quaternary structure, homotrimer.

It catalyses the reaction dCTP + H2O + H(+) = dUTP + NH4(+). It functions in the pathway pyrimidine metabolism; dUMP biosynthesis; dUMP from dCTP (dUTP route): step 1/2. Functionally, catalyzes the deamination of dCTP to dUTP. This is dCTP deaminase from Shewanella baltica (strain OS223).